The primary structure comprises 43 residues: ORF7b protein (43 aa).

The chain crosses the membrane as a helical span at residues 9–29; the sequence is FYLCFLAFLLFLVLIMLIIFW.

The protein localises to the host Golgi apparatus membrane. Its subcellular location is the host endosome membrane. This Homo sapiens (Human) protein is ORF7b protein.